A 356-amino-acid polypeptide reads, in one-letter code: DNA polymerase IV (356 aa).

Residues 6–187 (IIHIDMDYFF…LDIGDFPGVG (182 aa)) enclose the UmuC domain. Residues aspartate 10 and aspartate 105 each coordinate Mg(2+). Residue glutamate 106 is part of the active site.

It belongs to the DNA polymerase type-Y family. In terms of assembly, monomer. Mg(2+) is required as a cofactor.

Its subcellular location is the cytoplasm. The catalysed reaction is DNA(n) + a 2'-deoxyribonucleoside 5'-triphosphate = DNA(n+1) + diphosphate. Functionally, poorly processive, error-prone DNA polymerase involved in untargeted mutagenesis. Copies undamaged DNA at stalled replication forks, which arise in vivo from mismatched or misaligned primer ends. These misaligned primers can be extended by PolIV. Exhibits no 3'-5' exonuclease (proofreading) activity. May be involved in translesional synthesis, in conjunction with the beta clamp from PolIII. The protein is DNA polymerase IV of Staphylococcus aureus (strain COL).